Consider the following 384-residue polypeptide: Lipoyl synthase 2, chloroplastic (384 aa).

The transit peptide at 1-48 (MAAYCSRVYHHHPVSPSTMQGSLARPSIHAGSASLTFRARPNSVSIVR) directs the protein to the chloroplast. Residues Cys-108, Cys-113, Cys-119, Cys-145, Cys-149, Cys-152, and Ser-360 each contribute to the [4Fe-4S] cluster site. The region spanning 128 to 349 (GDGDGIATAT…KEYGESLGFL (222 aa)) is the Radical SAM core domain.

The protein belongs to the radical SAM superfamily. Lipoyl synthase family. Requires [4Fe-4S] cluster as cofactor.

The protein resides in the plastid. It localises to the chloroplast. The enzyme catalyses [[Fe-S] cluster scaffold protein carrying a second [4Fe-4S](2+) cluster] + N(6)-octanoyl-L-lysyl-[protein] + 2 oxidized [2Fe-2S]-[ferredoxin] + 2 S-adenosyl-L-methionine + 4 H(+) = [[Fe-S] cluster scaffold protein] + N(6)-[(R)-dihydrolipoyl]-L-lysyl-[protein] + 4 Fe(3+) + 2 hydrogen sulfide + 2 5'-deoxyadenosine + 2 L-methionine + 2 reduced [2Fe-2S]-[ferredoxin]. The protein operates within protein modification; protein lipoylation via endogenous pathway; protein N(6)-(lipoyl)lysine from octanoyl-[acyl-carrier-protein]: step 2/2. Its function is as follows. Catalyzes the radical-mediated insertion of two sulfur atoms into the C-6 and C-8 positions of the octanoyl moiety bound to the lipoyl domains of lipoate-dependent enzymes, thereby converting the octanoylated domains into lipoylated derivatives. This Oryza sativa subsp. indica (Rice) protein is Lipoyl synthase 2, chloroplastic.